Consider the following 475-residue polypeptide: Dihydrolipoyl dehydrogenase (475 aa).

Residues 39 to 47 (EKDAYGGTC), Lys56, and Ala118 each bind FAD. Cys47 and Cys52 are joined by a disulfide. NAD(+) is bound by residues 186–190 (GGGYI), Glu209, and 275–278 (AVGR). Asp318 and Ala327 together coordinate FAD. His451 functions as the Proton acceptor in the catalytic mechanism.

It belongs to the class-I pyridine nucleotide-disulfide oxidoreductase family. As to quaternary structure, homodimer. Requires FAD as cofactor.

The protein resides in the cytoplasm. It carries out the reaction N(6)-[(R)-dihydrolipoyl]-L-lysyl-[protein] + NAD(+) = N(6)-[(R)-lipoyl]-L-lysyl-[protein] + NADH + H(+). The polypeptide is Dihydrolipoyl dehydrogenase (lpdA) (Haloferax volcanii (strain ATCC 29605 / DSM 3757 / JCM 8879 / NBRC 14742 / NCIMB 2012 / VKM B-1768 / DS2) (Halobacterium volcanii)).